A 281-amino-acid polypeptide reads, in one-letter code: MGAITLDGKATRDEIFVDLKQRVSELNASGRTPGLATILVGEDPGSQAYVRGKHSDCAKVGITSIRRDLPADISTATLNETIDELNANPDCTGYIVQLPLPKHLDENAALERIDPGKDADGLHPTNLGRLVLNTPAPLPCTPRGIVHLLRRYDVPIAGAHVVVIGRGVTVGRPLGLLLTRRSENATVTLCHTGTRDLATLTRQADIIVAAVGVPHMLTADMVRPGAAVVDVGVSRVDGKLTGDVHPDVWEVAGHVSPNPGGVGPLTRAFLLTNVVELAEQR.

NADP(+) is bound by residues 165–167 (GRG), Thr-192, and Val-233.

The protein belongs to the tetrahydrofolate dehydrogenase/cyclohydrolase family. Homodimer.

The enzyme catalyses (6R)-5,10-methylene-5,6,7,8-tetrahydrofolate + NADP(+) = (6R)-5,10-methenyltetrahydrofolate + NADPH. It catalyses the reaction (6R)-5,10-methenyltetrahydrofolate + H2O = (6R)-10-formyltetrahydrofolate + H(+). The protein operates within one-carbon metabolism; tetrahydrofolate interconversion. Catalyzes the oxidation of 5,10-methylenetetrahydrofolate to 5,10-methenyltetrahydrofolate and then the hydrolysis of 5,10-methenyltetrahydrofolate to 10-formyltetrahydrofolate. This chain is Bifunctional protein FolD, found in Mycobacterium ulcerans (strain Agy99).